A 142-amino-acid chain; its full sequence is Lysosomal enzyme trafficking factor (142 aa).

Transmembrane regions (helical) follow at residues 8-28 (MGWI…YYIF) and 76-96 (LLPF…VFLF).

The protein belongs to the LYSET family.

The protein resides in the golgi apparatus membrane. Functionally, required for mannose-6-phosphate-dependent trafficking of lysosomal enzymes. LYSET bridges GlcNAc-1-phosphate transferase (GNPTAB), to the membrane-bound transcription factor site-1 protease (MBTPS1), thus allowing proteolytic activation of the GNPTAB. GNPTAB is involved in the regulation of M6P-dependent Golgi-to-lysosome trafficking of lysosomal enzymes. LYSET is thus an essential factor for maturation and delivery of lysosomal hydrolases. This Danio rerio (Zebrafish) protein is Lysosomal enzyme trafficking factor (tmem251).